The sequence spans 78 residues: Large ribosomal subunit protein bL28 (78 aa).

It belongs to the bacterial ribosomal protein bL28 family.

The sequence is that of Large ribosomal subunit protein bL28 from Synechococcus sp. (strain CC9311).